Reading from the N-terminus, the 261-residue chain is Leucine-rich repeat-containing protein 18 (261 aa).

LRR repeat units follow at residues 28 to 49 (GKKR…ILRL), 51 to 72 (DMDE…ISKF), 74 to 95 (NLRW…IGQM), 97 to 118 (SLLY…VELK), 122 to 144 (NIRA…GALK), 145 to 167 (ELHE…SKLP), and 168 to 189 (KLKK…EIFI).

The protein resides in the cytoplasm. Functionally, may be involved in the regulation of spermatogenesis and sperm maturation. In Homo sapiens (Human), this protein is Leucine-rich repeat-containing protein 18 (LRRC18).